The chain runs to 500 residues: 4-alpha-glucanotransferase (500 aa).

This sequence belongs to the disproportionating enzyme family.

It is found in the cytoplasm. It carries out the reaction Transfers a segment of a (1-&gt;4)-alpha-D-glucan to a new position in an acceptor, which may be glucose or a (1-&gt;4)-alpha-D-glucan.. This chain is 4-alpha-glucanotransferase (malQ), found in Thermus thermophilus.